The chain runs to 310 residues: Transcription factor RAX3 (310 aa).

HTH myb-type domains lie at 9-62 (KANV…LNYL) and 63-117 (RPNI…KKKL). DNA-binding regions (H-T-H motif) lie at residues 38 to 62 (WIAL…LNYL) and 90 to 113 (WSII…NTRL).

As to expression, ubiquitous.

The protein localises to the nucleus. Its function is as follows. Transcription activator. Positively regulates axillary meristems (AMs) formation and development, especially during inflorescence. This Arabidopsis thaliana (Mouse-ear cress) protein is Transcription factor RAX3 (RAX3).